Consider the following 88-residue polypeptide: Small ribosomal subunit protein uS15 (88 aa).

It belongs to the universal ribosomal protein uS15 family. Part of the 30S ribosomal subunit. Forms a bridge to the 50S subunit in the 70S ribosome, contacting the 23S rRNA.

Functionally, one of the primary rRNA binding proteins, it binds directly to 16S rRNA where it helps nucleate assembly of the platform of the 30S subunit by binding and bridging several RNA helices of the 16S rRNA. In terms of biological role, forms an intersubunit bridge (bridge B4) with the 23S rRNA of the 50S subunit in the ribosome. This chain is Small ribosomal subunit protein uS15, found in Mycoplasmopsis synoviae (strain 53) (Mycoplasma synoviae).